The chain runs to 332 residues: Super small secreted glycoprotein (332 aa).

An N-terminal signal peptide occupies residues 1 to 33 (MGSGYQLLQLPRERFRKTSFLVWVIILFQRAIS). Asparagine 41 carries an N-linked (GlcNAc...) asparagine; by host glycan. 2 cysteine pairs are disulfide-bonded: cysteine 109-cysteine 136 and cysteine 122-cysteine 148. Asparagine 205, asparagine 239, asparagine 258, and asparagine 269 each carry an N-linked (GlcNAc...) asparagine; by host glycan.

This sequence belongs to the filoviruses glycoprotein family.

It localises to the secreted. In Homo sapiens (Human), this protein is Super small secreted glycoprotein (GP).